The primary structure comprises 608 residues: Kelch-like protein 10 (608 aa).

The BTB domain occupies 39–106 (CDVVIKVNGF…AYTRTVPITP (68 aa)). Kelch repeat units lie at residues 292 to 339 (ILFA…YLKG), 340 to 386 (YVYI…VLSN), 388 to 433 (IYAM…TLYG), 434 to 480 (KVYI…AYGE), 481 to 527 (HVYA…VVDD), and 529 to 574 (LFVV…VVPG). The residue at position 501 (Ser501) is a Phosphoserine.

As to quaternary structure, self-associates. Interacts with CUL3; indicative for the participation in an E3 ubiquitin ligase complex. Testis specific.

The protein localises to the cytoplasm. It participates in protein modification; protein ubiquitination. In terms of biological role, may be a substrate-specific adapter of a CUL3-based E3 ubiquitin-protein ligase complex which mediates the ubiquitination and subsequent proteasomal degradation of target proteins during spermatogenesis. Required for male fertility. In Mus musculus (Mouse), this protein is Kelch-like protein 10 (Klhl10).